Reading from the N-terminus, the 311-residue chain is Heme A synthase (311 aa).

Residues 1–6 lie on the Cytoplasmic side of the membrane; it reads MQRFIK. The chain crosses the membrane as a helical span at residues 7 to 27; it reads WLAVITSLDLLIVLLGGALVT. The Extracellular portion of the chain corresponds to 28–62; the sequence is KTGSGQGCGKSWPLCNGEFVPSNLSMETIIELSHR. A disulfide bridge links Cys35 with Cys42. The active site involves Glu58. Position 61 (His61) interacts with heme o. A helical membrane pass occupies residues 63–83; that stretch reads LTSGSAGILVTLLCILSWKYY. Residues 84–91 lie on the Cytoplasmic side of the membrane; it reads KHVRETKT. Residues 92-112 traverse the membrane as a helical segment; sequence LAILSFVFLVAQALMGAAAVV. At 113–121 the chain is on the extracellular side; the sequence is WGQMPAVLA. A helical membrane pass occupies residues 122–142; that stretch reads IHFGISLISFASVILLTCLIF. Residue His123 participates in heme o binding. The Cytoplasmic segment spans residues 143–159; that stretch reads EIDQKFDARSLIMDKKM. Residues 160–180 traverse the membrane as a helical segment; it reads KFHIYGVTIYSYIVVYTGALV. Residues 181 to 211 are Extracellular-facing; that stretch reads RHERASLACPDFPLCSKNRPMPTQLHEWVQM. A disulfide bridge connects residues Cys189 and Cys195. The helical transmembrane segment at 212–232 threads the bilayer; the sequence is GHRVAAMLIFAWILYAMILAI. A heme b-binding site is contributed by His213. The Cytoplasmic segment spans residues 233 to 243; it reads RHYKQQPVVYW. The helical transmembrane segment at 244–264 threads the bilayer; that stretch reads GWIISFILVTLQAVVGVLVVF. Residues 265-271 lie on the Extracellular side of the membrane; that stretch reads TNASLAM. Residues 272–292 form a helical membrane-spanning segment; the sequence is ALLHSLFISCLFAVLCYLVML. His275 contributes to the heme b binding site. Residues 293–311 lie on the Cytoplasmic side of the membrane; sequence GTRIKVNAKEAGSTSKQTK.

Belongs to the COX15/CtaA family. Type 1 subfamily. Interacts with CtaB. Heme b is required as a cofactor.

Its subcellular location is the cell membrane. It carries out the reaction Fe(II)-heme o + 2 A + H2O = Fe(II)-heme a + 2 AH2. It functions in the pathway porphyrin-containing compound metabolism; heme A biosynthesis; heme A from heme O: step 1/1. In terms of biological role, catalyzes the conversion of heme O to heme A by two successive hydroxylations of the methyl group at C8. The first hydroxylation forms heme I, the second hydroxylation results in an unstable dihydroxymethyl group, which spontaneously dehydrates, resulting in the formyl group of heme A. This is Heme A synthase from Bacillus cereus (strain G9842).